The sequence spans 234 residues: Sugar fermentation stimulation protein homolog (234 aa).

The protein belongs to the SfsA family.

The sequence is that of Sugar fermentation stimulation protein homolog from Shewanella baltica (strain OS223).